A 423-amino-acid polypeptide reads, in one-letter code: Mannose-6-phosphate isomerase (423 aa).

Residue Ala2 is modified to N-acetylalanine. Phosphoserine occurs at positions 102 and 108. Zn(2+)-binding residues include Gln110, His112, Glu137, and His276. The active site involves Arg295.

The protein belongs to the mannose-6-phosphate isomerase type 1 family. Requires Zn(2+) as cofactor. As to expression, expressed in all tissues, but more abundant in heart, brain and skeletal muscle.

Its subcellular location is the cytoplasm. It catalyses the reaction D-mannose 6-phosphate = D-fructose 6-phosphate. It participates in nucleotide-sugar biosynthesis; GDP-alpha-D-mannose biosynthesis; alpha-D-mannose 1-phosphate from D-fructose 6-phosphate: step 1/2. Isomerase that catalyzes the interconversion of fructose-6-P and mannose-6-P and has a critical role in the supply of D-mannose derivatives required for many eukaryotic glycosylation reactions. The chain is Mannose-6-phosphate isomerase from Homo sapiens (Human).